The chain runs to 897 residues: Ubiquitin carboxyl-terminal hydrolase 33 (897 aa).

A UBP-type zinc finger spans residues 7-110 (NDCPHLECVG…KQLPNAAKAV (104 aa)). Zn(2+) is bound by residues cysteine 9, histidine 11, cysteine 31, cysteine 34, cysteine 44, cysteine 49, cysteine 54, histidine 61, histidine 65, histidine 71, cysteine 84, and cysteine 87. A USP domain is found at 156–670 (TGLKNIGNTC…EAYVLFYKKS (515 aa)). Cysteine 165 (nucleophile) is an active-site residue. Disordered stretches follow at residues 261-308 (LIPE…GPRV) and 343-420 (GSHG…HKKV). The span at 287–297 (DDFQSCESCGS) shows a compositional bias: polar residues. 2 stretches are compositionally biased toward basic and acidic residues: residues 299 to 308 (DRADNEGPRV) and 344 to 353 (SHGDLDKDVD). A compositionally biased stretch (polar residues) spans 355 to 396 (TSDSRPIISSQGAIKAQGRTSDSEIQVSSTVRPQSPTGNEGI). Low complexity predominate over residues 398-411 (SRLSSSPPKSSAWP). Residue histidine 628 is the Proton acceptor of the active site. 2 consecutive DUSP domains span residues 672–765 (DETQ…LYVC) and 773–876 (EKLE…RPSV). A compositionally biased stretch (low complexity) spans 875 to 884 (SVSHQESETS). The tract at residues 875-897 (SVSHQESETSQSEEKIEVETRTV) is disordered. Basic and acidic residues predominate over residues 886 to 897 (SEEKIEVETRTV).

Belongs to the peptidase C19 family. USP20/USP33 subfamily.

It is found in the cytoplasm. It localises to the perinuclear region. Its subcellular location is the cytoskeleton. The protein localises to the microtubule organizing center. The protein resides in the centrosome. The enzyme catalyses Thiol-dependent hydrolysis of ester, thioester, amide, peptide and isopeptide bonds formed by the C-terminal Gly of ubiquitin (a 76-residue protein attached to proteins as an intracellular targeting signal).. In terms of biological role, deubiquitinating enzyme involved in various processes such as centrosome duplication, cellular migration and beta-2 adrenergic receptor/ADRB2 recycling. Involved in regulation of centrosome duplication by mediating deubiquitination of ccp110 in S and G2/M phase, leading to stabilize ccp110 during the period which centrioles duplicate and elongate. Involved in cell migration via its interaction with intracellular domain of robo1, leading to regulate the Slit signaling. Plays a role in commissural axon guidance cross the ventral midline of the neural tube in a Slit-dependent manner, possibly by mediating the deubiquitination of robo1. Acts as a regulator of G-protein coupled receptor (GPCR) signaling by mediating the deubiquitination of beta-arrestins (arrb1 and arrb2) and beta-2 adrenergic receptor (adrb2). Deubiquitinates dio2, thereby regulating thyroid hormone regulation. Mediates deubiquitination of both 'Lys-48'- and 'Lys-63'-linked polyubiquitin chains. This is Ubiquitin carboxyl-terminal hydrolase 33 (usp33) from Danio rerio (Zebrafish).